The following is a 320-amino-acid chain: Cytochrome f (320 aa).

The N-terminal stretch at 1–35 is a signal peptide; it reads MQTRNTFSWIKEEITRSISVSLMIYIITGASISNA. Heme-binding residues include Y36, C56, C59, and H60. A helical transmembrane segment spans residues 286–306; sequence VQGLLFFLASIVFAQIFLVLK.

The protein belongs to the cytochrome f family. The 4 large subunits of the cytochrome b6-f complex are cytochrome b6, subunit IV (17 kDa polypeptide, petD), cytochrome f and the Rieske protein, while the 4 small subunits are PetG, PetL, PetM and PetN. The complex functions as a dimer. It depends on heme as a cofactor.

The protein localises to the plastid. It is found in the chloroplast thylakoid membrane. Its function is as follows. Component of the cytochrome b6-f complex, which mediates electron transfer between photosystem II (PSII) and photosystem I (PSI), cyclic electron flow around PSI, and state transitions. This is Cytochrome f from Gossypium barbadense (Sea Island cotton).